The sequence spans 348 residues: Dihydroorotase (348 aa).

Positions 13 and 15 each coordinate Zn(2+). Residues 15–17 and Asn41 each bind substrate; that span reads HLR. Zn(2+)-binding residues include Lys99, His136, and His174. Lys99 is subject to N6-carboxylysine. His136 contacts substrate. Leu219 contacts substrate. Asp247 contacts Zn(2+). Residue Asp247 is part of the active site. Residues His251 and Ala263 each coordinate substrate.

This sequence belongs to the metallo-dependent hydrolases superfamily. DHOase family. Class II DHOase subfamily. As to quaternary structure, homodimer. It depends on Zn(2+) as a cofactor.

The enzyme catalyses (S)-dihydroorotate + H2O = N-carbamoyl-L-aspartate + H(+). The protein operates within pyrimidine metabolism; UMP biosynthesis via de novo pathway; (S)-dihydroorotate from bicarbonate: step 3/3. Functionally, catalyzes the reversible cyclization of carbamoyl aspartate to dihydroorotate. This Rhizobium johnstonii (strain DSM 114642 / LMG 32736 / 3841) (Rhizobium leguminosarum bv. viciae) protein is Dihydroorotase.